The chain runs to 157 residues: Probable succinate transporter subunit YjjB (157 aa).

4 helical membrane-spanning segments follow: residues 15–35 (ILAA…VQAL), 50–70 (MILM…SMLV), 87–107 (VFTV…TAMI), and 121–141 (LMIT…ALSV).

It belongs to the ThrE exporter (TC 2.A.79) family. In terms of assembly, the transporter is composed of YjjB and YjjP.

The protein localises to the cell inner membrane. In terms of biological role, involved in succinate export with YjjP. Both proteins are required for export. The protein is Probable succinate transporter subunit YjjB of Shigella dysenteriae serotype 1 (strain Sd197).